The sequence spans 242 residues: uncharacterized protein (242 aa).

Helical transmembrane passes span 75–95 (YAIF…HNFY), 116–136 (IVLI…FSLI), and 176–196 (IQGL…LEVI). The interval 204–242 (DVEMSSMRGQAITTEPASDNTMAEGTDCNTSKDVESGSS) is disordered. Residues 210–232 (MRGQAITTEPASDNTMAEGTDCN) show a composition bias toward polar residues. The span at 233–242 (TSKDVESGSS) shows a compositional bias: basic and acidic residues.

It localises to the cytoplasm. The protein localises to the membrane. This is an uncharacterized protein from Schizosaccharomyces pombe (strain 972 / ATCC 24843) (Fission yeast).